We begin with the raw amino-acid sequence, 264 residues long: Glutamate racemase (264 aa).

Substrate-binding positions include 10–11 (DS) and 42–43 (YG). Catalysis depends on C73, which acts as the Proton donor/acceptor. 74–75 (NT) serves as a coordination point for substrate. C183 acts as the Proton donor/acceptor in catalysis. 184–185 (TH) is a substrate binding site.

It belongs to the aspartate/glutamate racemases family.

The enzyme catalyses L-glutamate = D-glutamate. It participates in cell wall biogenesis; peptidoglycan biosynthesis. In terms of biological role, provides the (R)-glutamate required for cell wall biosynthesis. In Streptococcus pyogenes serotype M49 (strain NZ131), this protein is Glutamate racemase.